The sequence spans 303 residues: Aspartate carbamoyltransferase catalytic subunit (303 aa).

The carbamoyl phosphate site is built by R49 and T50. K77 is an L-aspartate binding site. R99, H126, and Q129 together coordinate carbamoyl phosphate. R159 and R211 together coordinate L-aspartate. Carbamoyl phosphate contacts are provided by S252 and P253.

It belongs to the aspartate/ornithine carbamoyltransferase superfamily. ATCase family. As to quaternary structure, heterododecamer (2C3:3R2) of six catalytic PyrB chains organized as two trimers (C3), and six regulatory PyrI chains organized as three dimers (R2).

It catalyses the reaction carbamoyl phosphate + L-aspartate = N-carbamoyl-L-aspartate + phosphate + H(+). Its pathway is pyrimidine metabolism; UMP biosynthesis via de novo pathway; (S)-dihydroorotate from bicarbonate: step 2/3. Its function is as follows. Catalyzes the condensation of carbamoyl phosphate and aspartate to form carbamoyl aspartate and inorganic phosphate, the committed step in the de novo pyrimidine nucleotide biosynthesis pathway. The chain is Aspartate carbamoyltransferase catalytic subunit from Listeria monocytogenes serotype 4b (strain F2365).